Here is a 493-residue protein sequence, read N- to C-terminus: Adenylyltransferase and sulfurtransferase uba4 (493 aa).

ATP is bound by residues Gly-99, Asp-120, 127 to 131 (SNLHR), Lys-144, and 188 to 189 (DN). Cys-237 and Cys-240 together coordinate Zn(2+). Cys-254 acts as the Glycyl thioester intermediate; for adenylyltransferase activity in catalysis. Zn(2+) contacts are provided by Cys-316 and Cys-319. One can recognise a Rhodanese domain in the interval 376 to 491 (INKEPTIIDV…WREQIDPDWP (116 aa)). Cys-446 (cysteine persulfide intermediate; for sulfurtransferase activity) is an active-site residue.

The protein in the N-terminal section; belongs to the HesA/MoeB/ThiF family. UBA4 subfamily. Requires Zn(2+) as cofactor.

The protein resides in the cytoplasm. The protein localises to the cytosol. The enzyme catalyses [molybdopterin-synthase sulfur-carrier protein]-C-terminal Gly-Gly + ATP + H(+) = [molybdopterin-synthase sulfur-carrier protein]-C-terminal Gly-Gly-AMP + diphosphate. The catalysed reaction is [molybdopterin-synthase sulfur-carrier protein]-C-terminal Gly-Gly-AMP + S-sulfanyl-L-cysteinyl-[cysteine desulfurase] + AH2 = [molybdopterin-synthase sulfur-carrier protein]-C-terminal-Gly-aminoethanethioate + L-cysteinyl-[cysteine desulfurase] + A + AMP + 2 H(+). It functions in the pathway tRNA modification; 5-methoxycarbonylmethyl-2-thiouridine-tRNA biosynthesis. The protein operates within cofactor biosynthesis; molybdopterin biosynthesis. Its function is as follows. Plays a central role in 2-thiolation of mcm(5)S(2)U at tRNA wobble positions of cytosolic tRNA(Lys), tRNA(Glu) and tRNA(Gln). Also essential during biosynthesis of the molybdenum cofactor. Acts by mediating the C-terminal thiocarboxylation of sulfur carriers urm1 and mocs2a. Its N-terminus first activates urm1 and mocs2a as acyl-adenylates (-COAMP), then the persulfide sulfur on the catalytic cysteine is transferred to urm1 and mocs2a to form thiocarboxylation (-COSH) of their C-terminus. The reaction probably involves hydrogen sulfide that is generated from the persulfide intermediate and that acts as a nucleophile towards urm1 and mocs2a. Subsequently, a transient disulfide bond is formed. Does not use thiosulfate as sulfur donor; nfs1 probably acting as a sulfur donor for thiocarboxylation reactions. The sequence is that of Adenylyltransferase and sulfurtransferase uba4 from Aspergillus fumigatus (strain CBS 144.89 / FGSC A1163 / CEA10) (Neosartorya fumigata).